The sequence spans 232 residues: Probable metallo-hydrolase M6_Spy0554 (232 aa).

Zn(2+) contacts are provided by His-75, His-77, Asp-79, His-80, His-155, Asp-174, and His-215.

Zn(2+) is required as a cofactor.

The protein is Probable metallo-hydrolase M6_Spy0554 of Streptococcus pyogenes serotype M6 (strain ATCC BAA-946 / MGAS10394).